We begin with the raw amino-acid sequence, 489 residues long: MAGKITVVGLGAGDMDQLTIGIHKLLTKADTLYVRTKDHPLIEELEKETKNIRFFDDIYEKHDQFEAVYEEIADILFEAARREDVVYAVPGHPFVAEKTVQLLTERQEKENVQVKVAGGQSFLDATFNVLQIDPIEGFQFVDAGTLSADELELRHHLIICQVYDQMTASEVKLTLMEKLPDDYEVVIVTAAGSRGEEIRTVPLFELDRNVALNNLTSVYIPPIKEEKLLYHEFSTFRSIIRELRGPNGCPWDKKQTHQSLKQYMIEECYELLEAIDEEDTDHMIEELGDVLLQVLLHAQIGEDEGYFTIDDVIKGISEKMVRRHPHVFKDVKVQDENDVLANWEDIKKAEKNTSESSLLDSVPKTLPALSKAAKLQKKAAKVGFDWEDVSDIWEKVSEEMKEFSSEVSEAPHEHNLKAEFGDILFALVNVARFYKIEPEEALTMTNDKFRRRFSYIEETAKEEGVELADMSLEDMDKLWNEAKETERRS.

This is an uncharacterized protein from Bacillus subtilis (strain 168).